Here is a 446-residue protein sequence, read N- to C-terminus: Phosphoglucosamine mutase (446 aa).

S101 serves as the catalytic Phosphoserine intermediate. 4 residues coordinate Mg(2+): S101, D240, D242, and D244. S101 is modified (phosphoserine).

The protein belongs to the phosphohexose mutase family. Requires Mg(2+) as cofactor. Post-translationally, activated by phosphorylation.

The catalysed reaction is alpha-D-glucosamine 1-phosphate = D-glucosamine 6-phosphate. Catalyzes the conversion of glucosamine-6-phosphate to glucosamine-1-phosphate. The protein is Phosphoglucosamine mutase of Pseudomonas putida (strain ATCC 700007 / DSM 6899 / JCM 31910 / BCRC 17059 / LMG 24140 / F1).